A 329-amino-acid chain; its full sequence is Lipoyl synthase (329 aa).

Positions 55, 60, 66, 81, 85, 88, and 292 each coordinate [4Fe-4S] cluster. Residues 67–281 (WEDREATFLI…KAEAEAIGFL (215 aa)) enclose the Radical SAM core domain.

It belongs to the radical SAM superfamily. Lipoyl synthase family. The cofactor is [4Fe-4S] cluster.

The protein resides in the cytoplasm. The catalysed reaction is [[Fe-S] cluster scaffold protein carrying a second [4Fe-4S](2+) cluster] + N(6)-octanoyl-L-lysyl-[protein] + 2 oxidized [2Fe-2S]-[ferredoxin] + 2 S-adenosyl-L-methionine + 4 H(+) = [[Fe-S] cluster scaffold protein] + N(6)-[(R)-dihydrolipoyl]-L-lysyl-[protein] + 4 Fe(3+) + 2 hydrogen sulfide + 2 5'-deoxyadenosine + 2 L-methionine + 2 reduced [2Fe-2S]-[ferredoxin]. It participates in protein modification; protein lipoylation via endogenous pathway; protein N(6)-(lipoyl)lysine from octanoyl-[acyl-carrier-protein]: step 2/2. Functionally, catalyzes the radical-mediated insertion of two sulfur atoms into the C-6 and C-8 positions of the octanoyl moiety bound to the lipoyl domains of lipoate-dependent enzymes, thereby converting the octanoylated domains into lipoylated derivatives. This chain is Lipoyl synthase, found in Clavibacter sepedonicus (Clavibacter michiganensis subsp. sepedonicus).